Here is a 142-residue protein sequence, read N- to C-terminus: Large ribosomal subunit protein uL11 (142 aa).

It belongs to the universal ribosomal protein uL11 family. Part of the ribosomal stalk of the 50S ribosomal subunit. Interacts with L10 and the large rRNA to form the base of the stalk. L10 forms an elongated spine to which L12 dimers bind in a sequential fashion forming a multimeric L10(L12)X complex. Post-translationally, one or more lysine residues are methylated.

Functionally, forms part of the ribosomal stalk which helps the ribosome interact with GTP-bound translation factors. The polypeptide is Large ribosomal subunit protein uL11 (Shigella boydii serotype 4 (strain Sb227)).